Consider the following 278-residue polypeptide: Ribosomal RNA small subunit methyltransferase A (278 aa).

6 residues coordinate S-adenosyl-L-methionine: asparagine 28, leucine 30, glycine 55, glutamate 77, aspartate 103, and asparagine 122.

This sequence belongs to the class I-like SAM-binding methyltransferase superfamily. rRNA adenine N(6)-methyltransferase family. RsmA subfamily.

It is found in the cytoplasm. The enzyme catalyses adenosine(1518)/adenosine(1519) in 16S rRNA + 4 S-adenosyl-L-methionine = N(6)-dimethyladenosine(1518)/N(6)-dimethyladenosine(1519) in 16S rRNA + 4 S-adenosyl-L-homocysteine + 4 H(+). Specifically dimethylates two adjacent adenosines (A1518 and A1519) in the loop of a conserved hairpin near the 3'-end of 16S rRNA in the 30S particle. May play a critical role in biogenesis of 30S subunits. This chain is Ribosomal RNA small subunit methyltransferase A, found in Cereibacter sphaeroides (strain ATCC 17025 / ATH 2.4.3) (Rhodobacter sphaeroides).